A 482-amino-acid polypeptide reads, in one-letter code: Ribosomal RNA small subunit methyltransferase F (482 aa).

S-adenosyl-L-methionine contacts are provided by residues Ala-119 to Lys-125, Glu-143, Asp-170, and Asp-188. The Nucleophile role is filled by Cys-241.

Belongs to the class I-like SAM-binding methyltransferase superfamily. RsmB/NOP family.

The protein localises to the cytoplasm. It carries out the reaction cytidine(1407) in 16S rRNA + S-adenosyl-L-methionine = 5-methylcytidine(1407) in 16S rRNA + S-adenosyl-L-homocysteine + H(+). Specifically methylates the cytosine at position 1407 (m5C1407) of 16S rRNA. In Shewanella sp. (strain MR-7), this protein is Ribosomal RNA small subunit methyltransferase F.